The sequence spans 362 residues: 3-dehydroquinate synthase (362 aa).

NAD(+) contacts are provided by residues 71–76 (DGEQYK), 105–109 (GVIGD), 129–130 (TT), K142, K151, and 169–172 (CLST). Residues E184, H247, and H264 each contribute to the Zn(2+) site.

It belongs to the sugar phosphate cyclases superfamily. Dehydroquinate synthase family. Co(2+) serves as cofactor. It depends on Zn(2+) as a cofactor. NAD(+) is required as a cofactor.

Its subcellular location is the cytoplasm. It carries out the reaction 7-phospho-2-dehydro-3-deoxy-D-arabino-heptonate = 3-dehydroquinate + phosphate. It functions in the pathway metabolic intermediate biosynthesis; chorismate biosynthesis; chorismate from D-erythrose 4-phosphate and phosphoenolpyruvate: step 2/7. Catalyzes the conversion of 3-deoxy-D-arabino-heptulosonate 7-phosphate (DAHP) to dehydroquinate (DHQ). The protein is 3-dehydroquinate synthase of Vibrio atlanticus (strain LGP32) (Vibrio splendidus (strain Mel32)).